A 440-amino-acid chain; its full sequence is Replication factor C large subunit (440 aa).

An ATP-binding site is contributed by 48–55; that stretch reads GPPGVGKT.

It belongs to the activator 1 small subunits family. RfcL subfamily. Heteromultimer composed of small subunits (RfcS) and large subunits (RfcL).

Functionally, part of the RFC clamp loader complex which loads the PCNA sliding clamp onto DNA. This chain is Replication factor C large subunit, found in Sulfurisphaera tokodaii (strain DSM 16993 / JCM 10545 / NBRC 100140 / 7) (Sulfolobus tokodaii).